The following is a 497-amino-acid chain: tRNA-2-methylthio-N(6)-dimethylallyladenosine synthase (497 aa).

Positions 1–48 are disordered; that stretch reads MTGTSNIPTHGKEHKDAPALLPLPAPNTHHTHAAHPGDPSHDRHPSRG. Positions 18-28 are enriched in low complexity; the sequence is PALLPLPAPNT. Positions 48–165 constitute an MTTase N-terminal domain; the sequence is GKLFIKTHGC…LPDMIRARRE (118 aa). Residues C57, C94, C128, C202, C206, and C209 each coordinate [4Fe-4S] cluster. Positions 188–430 constitute a Radical SAM core domain; the sequence is RAEGPSAFVS…QKHINAYAAD (243 aa). In terms of domain architecture, TRAM spans 433–496; that stretch reads KRMIGTVQTV…TNSLRGRVHT (64 aa).

The protein belongs to the methylthiotransferase family. MiaB subfamily. In terms of assembly, monomer. It depends on [4Fe-4S] cluster as a cofactor.

Its subcellular location is the cytoplasm. The enzyme catalyses N(6)-dimethylallyladenosine(37) in tRNA + (sulfur carrier)-SH + AH2 + 2 S-adenosyl-L-methionine = 2-methylsulfanyl-N(6)-dimethylallyladenosine(37) in tRNA + (sulfur carrier)-H + 5'-deoxyadenosine + L-methionine + A + S-adenosyl-L-homocysteine + 2 H(+). Its function is as follows. Catalyzes the methylthiolation of N6-(dimethylallyl)adenosine (i(6)A), leading to the formation of 2-methylthio-N6-(dimethylallyl)adenosine (ms(2)i(6)A) at position 37 in tRNAs that read codons beginning with uridine. This Xylella fastidiosa (strain M23) protein is tRNA-2-methylthio-N(6)-dimethylallyladenosine synthase.